A 74-amino-acid chain; its full sequence is Alpha-conotoxin GeXIVA (74 aa).

A signal peptide spans 1-22; it reads MKLTCVLIITVLFLTACQLTTA. The propeptide occupies 23-46; the sequence is VTYSRGEHKHRALMSTGTNYRLPK. The tract at residues 56-64 is interacts with alpha-9-alpha-10 (CHRNA9-CHRNA10) nAChR; it reads RSPYDRRRR.

This sequence belongs to the conotoxin O1 superfamily. In terms of processing, the native disulfide bond pairing has not been studied. Three isomers may exist: the bead isomer (I-II; III-IV), the globular isomer (I-III; II-IV), the ribbon isomer (I-IV; II-III). They have all been synthesized and their activity tested. All of them show similar potency on alpha-9-alpha-10 (CHRNA9-CHRNA10) nAChR, showing that disulfide bonds does not significantly affect their activity. In addition, removal of disulfide bonds does not affect the activity on alpha-9-alpha-10 (CHRNA9-CHRNA10) nAChR either. In terms of tissue distribution, expressed by the venom duct.

It localises to the secreted. Functionally, alpha-conotoxins act on postsynaptic membranes, they bind to the nicotinic acetylcholine receptors (nAChR) and thus inhibit them. This toxin is very potent on alpha-9-alpha-10/CHRNA9-CHRNA10 nAChR (IC(50)=4.61-12 nM for the bead isomer (I-II; III-IV), IC(50)=7-16 nM for the ribbon isomer (I-IV; II-III) and IC(50)=22.7 nM for the globular isomer (I-III; II-IV)). The bead isomer also shows a weak inhibition on other nAChRs (alpha-1-beta-1-delta-epsilon/CHRNA1-CHRNB1-CHRND-CHRNE, alpha-7/CHRNA7, alpha-6/alpha-3-beta-2-beta-3 (CHRNA6/CHRNA3-CHRNB2-CHRNB3), alpha-3-beta-2/CHRNA3-CHRNB2, alpha-2-beta-2/CHRNA2-CHRNB2, alpha-6/alpha-3-beta-4 (CHRNA6/CHRNA3-CHRNB4), alpha-4-beta-2/CHRNA4-CHRNB2, alpha-4-beta-4/CHRNA4-CHRNB4, alpha-2-beta-4/CHRNA2-CHRNB4, alpha-3-beta-4/CHRNA3-CHRNB4). The toxin blockade is voltage-dependent, and its binding site does not overlap with the binding site of the competitive antagonist alpha-conotoxin RgIA. The toxin inhibits Sf9 cell growth. Both the bead and ribbon isomers relieve pain effects in the rat chronic constriction injury (CCI) model of neuropathic pain, and in the acute pain model of tail flick test, but have no effect on motor performance. The sequence is that of Alpha-conotoxin GeXIVA from Conus generalis (General cone).